Reading from the N-terminus, the 152-residue chain is Nucleoside diphosphate kinase (152 aa).

ATP-binding residues include K11, F59, R87, T93, R104, and N114. H117 serves as the catalytic Pros-phosphohistidine intermediate.

Belongs to the NDK family. As to quaternary structure, homotetramer. It depends on Mg(2+) as a cofactor.

The protein resides in the cytoplasm. It catalyses the reaction a 2'-deoxyribonucleoside 5'-diphosphate + ATP = a 2'-deoxyribonucleoside 5'-triphosphate + ADP. It carries out the reaction a ribonucleoside 5'-diphosphate + ATP = a ribonucleoside 5'-triphosphate + ADP. Functionally, major role in the synthesis of nucleoside triphosphates other than ATP. The ATP gamma phosphate is transferred to the NDP beta phosphate via a ping-pong mechanism, using a phosphorylated active-site intermediate. The chain is Nucleoside diphosphate kinase from Prochlorococcus marinus (strain MIT 9313).